The chain runs to 212 residues: Thymidylate kinase (212 aa).

9-16 (GIDGCGKT) provides a ligand contact to ATP.

The protein belongs to the thymidylate kinase family.

It catalyses the reaction dTMP + ATP = dTDP + ADP. In terms of biological role, phosphorylation of dTMP to form dTDP in both de novo and salvage pathways of dTTP synthesis. This chain is Thymidylate kinase, found in Synechococcus sp. (strain CC9311).